The following is a 584-amino-acid chain: Membrane frizzled-related protein (584 aa).

Residues 1 to 69 (MKDYDDVILR…QPDCHFSWFC (69 aa)) lie on the Cytoplasmic side of the membrane. A helical; Signal-anchor for type II membrane protein transmembrane segment spans residues 70–90 (ILLLSGLLLLLLGLLVAVILA). The Extracellular portion of the chain corresponds to 91–584 (QLQATSLPRT…AASLEACSQP (494 aa)). The interval 108–140 (RGLTPMGVIPSTTPNTTTTTTTTTPARTGQQEA) is disordered. Low complexity predominate over residues 119–132 (TTPNTTTTTTTTTP). 2 disulfide bridges follow: Cys-150–Cys-176 and Cys-203–Cys-222. A CUB 1 domain is found at 150 to 259 (CGGLLPGPSG…SGFQAWYQAV (110 aa)). Asn-233 is a glycosylation site (N-linked (GlcNAc...) asparagine). The LDL-receptor class A 1 domain maps to 265–301 (SCAHNEFHCDLLLCLKRDSVCDGITECADGSDEANCS). 5 disulfide bridges follow: Cys-266-Cys-278, Cys-273-Cys-291, Cys-285-Cys-300, Cys-307-Cys-333, and Cys-360-Cys-383. The CUB 2 domain maps to 307–420 (CGGNLTGLYG…GGFLATYQAI (114 aa)). Asn-421 is a glycosylation site (N-linked (GlcNAc...) asparagine). Residues 426–460 (GCPWAEFCQSGGYRDLQWMCDLWKDCANDSNDNCS) form the LDL-receptor class A 2 domain. 7 disulfides stabilise this stretch: Cys-433–Cys-451, Cys-445–Cys-459, Cys-471–Cys-533, Cys-479–Cys-526, Cys-517–Cys-554, Cys-543–Cys-581, and Cys-547–Cys-569. N-linked (GlcNAc...) asparagine glycosylation is present at Asn-458. The FZ domain maps to 466-584 (QPDLTCEPVQ…AASLEACSQP (119 aa)).

As to quaternary structure, interacts with C1QTNF5. In terms of tissue distribution, expressed in retinal pigment epithelium and ciliary epithelium of the eye.

The protein localises to the apical cell membrane. Its function is as follows. May play a role in eye development. In Mus musculus (Mouse), this protein is Membrane frizzled-related protein (Mfrp).